Consider the following 571-residue polypeptide: Origin recognition complex subunit 5 (571 aa).

2 disordered regions span residues 90-142 (DDEY…YDDD) and 404-430 (QIYP…GRQL). Low complexity-rich tracts occupy residues 107–133 (NNNN…NNND) and 407–416 (PPQQVPQQQK). Residues 417–428 (QQEKEKEKEKGR) show a composition bias toward basic and acidic residues.

Belongs to the ORC1 family. ORC is composed of six subunits.

The protein localises to the nucleus. Functionally, component of the origin recognition complex (ORC) that binds origins of replication. DNA-binding is ATP-dependent, however specific DNA sequences that define origins of replication have not been identified so far. ORC is required to assemble the pre-replication complex necessary to initiate DNA replication. This Dictyostelium discoideum (Social amoeba) protein is Origin recognition complex subunit 5 (orcE).